We begin with the raw amino-acid sequence, 599 residues long: Sulfite reductase [NADPH] flavoprotein alpha-component (599 aa).

Residues Val64–Val202 form the Flavodoxin-like domain. FMN contacts are provided by residues Ser70–Ala75, Ser117–Gly120, and Leu153–Cys162. The FAD-binding FR-type domain occupies Asp234–Pro448. Residues Thr322, Ala356, Arg386–Ser389, Thr404–Gly406, Tyr410, and Gly419–Ser422 contribute to the FAD site. Residues Ser519–Arg520, Lys525–Gln529, and Asp561 each bind NADP(+). FAD is bound at residue Tyr599.

The protein belongs to the NADPH-dependent sulphite reductase flavoprotein subunit CysJ family. In the N-terminal section; belongs to the flavodoxin family. This sequence in the C-terminal section; belongs to the flavoprotein pyridine nucleotide cytochrome reductase family. As to quaternary structure, alpha(8)-beta(8). The alpha component is a flavoprotein, the beta component is a hemoprotein. FAD serves as cofactor. It depends on FMN as a cofactor.

The enzyme catalyses hydrogen sulfide + 3 NADP(+) + 3 H2O = sulfite + 3 NADPH + 4 H(+). The protein operates within sulfur metabolism; hydrogen sulfide biosynthesis; hydrogen sulfide from sulfite (NADPH route): step 1/1. Functionally, component of the sulfite reductase complex that catalyzes the 6-electron reduction of sulfite to sulfide. This is one of several activities required for the biosynthesis of L-cysteine from sulfate. The flavoprotein component catalyzes the electron flow from NADPH -&gt; FAD -&gt; FMN to the hemoprotein component. In Salmonella paratyphi A (strain ATCC 9150 / SARB42), this protein is Sulfite reductase [NADPH] flavoprotein alpha-component.